The sequence spans 490 residues: Tryptophan 5-hydroxylase 2 (490 aa).

A Phosphoserine modification is found at Ser19. Residues 31-42 (LGSSTLNKPNSG) are compositionally biased toward polar residues. Residues 31-58 (LGSSTLNKPNSGKNDDKGNKGSSKREAA) form a disordered region. A compositionally biased stretch (basic and acidic residues) spans 43–58 (KNDDKGNKGSSKREAA). One can recognise an ACT domain in the interval 65-140 (AVVFSLKNEV…TIVTLNPPEN (76 aa)). Positions 318, 323, and 363 each coordinate Fe cation.

The protein belongs to the biopterin-dependent aromatic amino acid hydroxylase family. In terms of assembly, interacts with DNAJC12. Fe(2+) serves as cofactor. Brain specific.

It carries out the reaction (6R)-L-erythro-5,6,7,8-tetrahydrobiopterin + L-tryptophan + O2 = 5-hydroxy-L-tryptophan + (4aS,6R)-4a-hydroxy-L-erythro-5,6,7,8-tetrahydrobiopterin. It functions in the pathway aromatic compound metabolism; serotonin biosynthesis; serotonin from L-tryptophan: step 1/2. This Homo sapiens (Human) protein is Tryptophan 5-hydroxylase 2 (TPH2).